Here is a 173-residue protein sequence, read N- to C-terminus: RNA pyrophosphohydrolase (173 aa).

The region spanning 11 to 164 (PYRKCVGILV…KKHVYTQVVK (154 aa)) is the Nudix hydrolase domain. Residues 52–73 (GGINQGEKPIDAARRELYEETG) carry the Nudix box motif.

The protein belongs to the Nudix hydrolase family. RppH subfamily. It depends on a divalent metal cation as a cofactor.

Functionally, accelerates the degradation of transcripts by removing pyrophosphate from the 5'-end of triphosphorylated RNA, leading to a more labile monophosphorylated state that can stimulate subsequent ribonuclease cleavage. The sequence is that of RNA pyrophosphohydrolase from Bartonella clarridgeiae.